Here is a 172-residue protein sequence, read N- to C-terminus: Type IV secretion system putative outer membrane lipoprotein BAB2_0057 (172 aa).

Positions 1–15 are cleaved as a signal peptide; that stretch reads MRTLVMVACAVSLAA. Residue cysteine 16 is the site of N-palmitoyl cysteine attachment. Cysteine 16 is lipidated: S-diacylglycerol cysteine. The region spanning 58–172 is the OmpA-like domain; sequence WPARPPKQTV…RRVDIEILRK (115 aa).

The protein resides in the cell outer membrane. Its function is as follows. The virB operon is essential for intracellular survival and is not involved in the invasion process. Constitutes a major determinant of virulence in mice. This protein is essential for pathogenesis in mice but is not required for intracellular survival. The protein is Type IV secretion system putative outer membrane lipoprotein BAB2_0057 of Brucella abortus (strain 2308).